Consider the following 653-residue polypeptide: Choline transporter-like protein 3 (653 aa).

The helical transmembrane segment at 34–54 (WLFLFFLFWTGLVFIMGYSVV) threads the bilayer. 2 N-linked (GlcNAc...) asparagine glycosylation sites follow: Asn-136 and Asn-151. The next 5 helical transmembrane spans lie at 213–233 (DTIL…MFTF), 243–263 (IFIS…WWLY), 284–304 (VLGF…LIFV), 334–354 (LWTF…LLSL), and 384–404 (LIGL…TIAG). N-linked (GlcNAc...) asparagine glycans are attached at residues Asn-412, Asn-503, and Asn-521. 2 helical membrane passes run 534–554 (FIIF…GLMA) and 563–583 (VWAV…HSFL). Residues 632–653 (RAQQDKHSLRNEEGTELQAIVR) form a disordered region. The segment covering 634 to 644 (QQDKHSLRNEE) has biased composition (basic and acidic residues).

Belongs to the CTL (choline transporter-like) family.

The protein resides in the membrane. The polypeptide is Choline transporter-like protein 3 (SLC44A3) (Homo sapiens (Human)).